The chain runs to 406 residues: Cysteine desulfurase (406 aa).

N6-(pyridoxal phosphate)lysine is present on lysine 226. Catalysis depends on cysteine 364, which acts as the Cysteine persulfide intermediate.

It belongs to the class-V pyridoxal-phosphate-dependent aminotransferase family. Csd subfamily. As to quaternary structure, homodimer. Interacts with SufE and the SufBCD complex composed of SufB, SufC and SufD. The interaction with SufE is required to mediate the direct transfer of the sulfur atom from the S-sulfanylcysteine. Pyridoxal 5'-phosphate is required as a cofactor.

The protein resides in the cytoplasm. It catalyses the reaction (sulfur carrier)-H + L-cysteine = (sulfur carrier)-SH + L-alanine. The enzyme catalyses L-selenocysteine + AH2 = hydrogenselenide + L-alanine + A + H(+). The protein operates within cofactor biosynthesis; iron-sulfur cluster biosynthesis. Cysteine desulfurases mobilize the sulfur from L-cysteine to yield L-alanine, an essential step in sulfur metabolism for biosynthesis of a variety of sulfur-containing biomolecules. Component of the suf operon, which is activated and required under specific conditions such as oxidative stress and iron limitation. Acts as a potent selenocysteine lyase in vitro, that mobilizes selenium from L-selenocysteine. Selenocysteine lyase activity is however unsure in vivo. This Escherichia coli O9:H4 (strain HS) protein is Cysteine desulfurase.